A 158-amino-acid polypeptide reads, in one-letter code: NADH-quinone oxidoreductase subunit B 1 (158 aa).

Positions 37, 38, 102, and 132 each coordinate [4Fe-4S] cluster.

Belongs to the complex I 20 kDa subunit family. NDH-1 is composed of 14 different subunits. Subunits NuoB, C, D, E, F, and G constitute the peripheral sector of the complex. Requires [4Fe-4S] cluster as cofactor.

Its subcellular location is the cell inner membrane. It carries out the reaction a quinone + NADH + 5 H(+)(in) = a quinol + NAD(+) + 4 H(+)(out). NDH-1 shuttles electrons from NADH, via FMN and iron-sulfur (Fe-S) centers, to quinones in the respiratory chain. Couples the redox reaction to proton translocation (for every two electrons transferred, four hydrogen ions are translocated across the cytoplasmic membrane), and thus conserves the redox energy in a proton gradient. In Azoarcus sp. (strain BH72), this protein is NADH-quinone oxidoreductase subunit B 1.